A 224-amino-acid polypeptide reads, in one-letter code: Thiamine-triphosphatase (224 aa).

Alanine 2 is modified (N-acetylalanine). A CYTH domain is found at 5 to 201 (LIEVERKFAP…AKLMVYLQRF (197 aa)). Residues glutamate 7 and glutamate 9 each coordinate Mg(2+). Lysine 11, arginine 55, arginine 57, lysine 65, and arginine 125 together coordinate substrate. Residues aspartate 145, glutamate 157, and glutamate 159 each coordinate Mg(2+). A substrate-binding site is contributed by glutamate 157. Lysine 193 lines the substrate pocket.

The protein belongs to the ThTPase family. In terms of assembly, monomer. It depends on Mg(2+) as a cofactor.

It is found in the cytoplasm. The enzyme catalyses thiamine triphosphate + H2O = thiamine diphosphate + phosphate + H(+). Hydrolase highly specific for thiamine triphosphate (ThTP). The polypeptide is Thiamine-triphosphatase (Thtpa) (Mus musculus (Mouse)).